Reading from the N-terminus, the 315-residue chain is Protein rlx (315 aa).

The segment at 263–315 (TEQLKQRRVERAQETKQAHSKISSRDTRESENQRERAKGNNIRIERGDEGLSR) is disordered.

In terms of biological role, this protein is probably required for relaxation complex formation and plasmid mobilization by conjugative plasmids. This chain is Protein rlx (rlx), found in Staphylococcus aureus.